The chain runs to 468 residues: Heat stress transcription factor A-1e (468 aa).

The DNA-binding element occupies 21 to 115 (IPPFLSKTYD…ILKSIVRRKP (95 aa)). Residues 133-199 (ACVEVGKFGL…QMMSFLAKAV (67 aa)) form a hydrophobic repeat HR-A/B region. The span at 211 to 220 (QSNEANQHIS) shows a compositional bias: polar residues. 2 disordered regions span residues 211–244 (QSNEANQHISESNKKRRLPVEDQMNSGSHGVNGL) and 268–309 (QMSN…PEVT). Positions 223-227 (NKKRR) match the Nuclear localization signal motif. Low complexity predominate over residues 277–305 (SLSSNNGSFLLGDVPNSNISDNGSSSNGS). Positions 402 to 411 (DSFWEQFIGE) match the AHA motif. The short motif at 454–461 (LTEQMGLL) is the Nuclear export signal element.

Belongs to the HSF family. Class A subfamily. As to quaternary structure, homotrimer. Exhibits temperature-dependent phosphorylation.

It localises to the cytoplasm. Its subcellular location is the nucleus. Its function is as follows. Transcriptional activator that specifically binds DNA sequence 5'-AGAAnnTTCT-3' known as heat shock promoter elements (HSE). The protein is Heat stress transcription factor A-1e (HSFA1E) of Arabidopsis thaliana (Mouse-ear cress).